A 107-amino-acid chain; its full sequence is Ferredoxin (107 aa).

2 consecutive 4Fe-4S ferredoxin-type domains span residues 2-30 and 31-60; these read TYVV…YEGE and FMLV…PETP. 2 residues coordinate [3Fe-4S] cluster: cysteine 9 and cysteine 17. [4Fe-4S] cluster-binding residues include cysteine 21, cysteine 40, cysteine 43, and cysteine 46. [3Fe-4S] cluster is bound at residue cysteine 50.

[4Fe-4S] cluster is required as a cofactor. It depends on [3Fe-4S] cluster as a cofactor.

In terms of biological role, ferredoxins are iron-sulfur proteins that transfer electrons in a wide variety of metabolic reactions. The sequence is that of Ferredoxin (fdxA) from Rickettsia bellii (strain RML369-C).